We begin with the raw amino-acid sequence, 434 residues long: Pancreatic lipase-related protein 2 (434 aa).

Cysteine 4 and cysteine 10 form a disulfide bridge. The segment at 76–88 (IHGFTDSGENSWL) is required for galactolipase activity. Cysteine 92 and cysteine 103 are joined by a disulfide. Serine 154 (nucleophile) is an active-site residue. Aspartate 178 serves as the catalytic Charge relay system. Positions 189, 192, 194, and 197 each coordinate Ca(2+). Cysteines 239 and 245 form a disulfide. Residues 240-244 (KTGIS) form a required for galactolipase activity region. Histidine 247 acts as the Charge relay system in catalysis. 2 disulfides stabilise this stretch: cysteine 269–cysteine 280 and cysteine 283–cysteine 288. N-linked (GlcNAc...) asparagine glycosylation occurs at asparagine 318. A PLAT domain is found at 322–434 (WRYKVTVTLS…ENVEQTLSPC (113 aa)). Cysteine 418 and cysteine 434 form a disulfide bridge.

It belongs to the AB hydrolase superfamily. Lipase family. Pancreas.

The protein resides in the secreted. The protein localises to the zymogen granule membrane. Its subcellular location is the cell projection. It localises to the neuron projection. It carries out the reaction a triacylglycerol + H2O = a diacylglycerol + a fatty acid + H(+). The catalysed reaction is a 1,2-diacyl-3-O-(beta-D-galactosyl)-sn-glycerol + 2 H2O = 3-beta-D-galactosyl-sn-glycerol + 2 a fatty acid + 2 H(+). It catalyses the reaction 1,2,3-tri-(9Z-octadecenoyl)-glycerol + H2O = di-(9Z)-octadecenoylglycerol + (9Z)-octadecenoate + H(+). The enzyme catalyses di-(9Z)-octadecenoylglycerol + H2O = (9Z-octadecenoyl)-glycerol + (9Z)-octadecenoate + H(+). It carries out the reaction (9Z-octadecenoyl)-glycerol + H2O = glycerol + (9Z)-octadecenoate + H(+). The catalysed reaction is 1-(9Z-octadecenoyl)-glycerol + H2O = glycerol + (9Z)-octadecenoate + H(+). It catalyses the reaction 1,2,3-tripropanoylglycerol + H2O = dipropanoylglycerol + propanoate + H(+). The enzyme catalyses 1,2,3-tributanoylglycerol + H2O = dibutanoylglycerol + butanoate + H(+). It carries out the reaction 1,2,3-trioctanoylglycerol + H2O = dioctanoylglycerol + octanoate + H(+). The catalysed reaction is 1,2-didecanoylglycerol + H2O = decanoylglycerol + decanoate + H(+). It catalyses the reaction long chain 1,2-diacyl-3-O-beta-D-galactosyl-sn-glycerol + H2O = long chain acyl-3-O-beta-D-galactosyl-sn-glycerol + a fatty acid + H(+). The enzyme catalyses 1,2-dioctanoyl-3-O-beta-D-galactosyl-sn-glycerol + H2O = octanoyl-3-(beta-D-galactosyl)-sn-glycerol + octanoate + H(+). It carries out the reaction 1,2-didodecanoyl-3-beta-D-galactosyl-sn-glycerol + H2O = dodecanoyl-3-beta-D-galactosyl-sn-glycerol + dodecanoate + H(+). The catalysed reaction is 1-beta-D-galactosyl-2,3-didodecanoyl-sn-glycerol + H2O = 1-beta-D-galactosyl-dodecanoyl-sn-glycerol + dodecanoate + H(+). It catalyses the reaction a 1,2-diacyl-3-O-[alpha-D-galactosyl-(1-&gt;6)-beta-D-galactosyl]-sn-glycerol + H2O = acyl-3-O-[alpha-D-galactosyl-(1-&gt;6)-beta-D-galactosyl]-sn-glycerol + a fatty acid + H(+). The enzyme catalyses long chain 1,2-diacyl-3-O-[alpha-D-galactosyl-(1-&gt;6)-beta-D-galactosyl]-sn-glycerol + H2O = long chain acyl-3-O-[alpha-D-galactosyl-(1-&gt;6)-beta-D-galactosyl]-sn-glycerol + a fatty acid + H(+). It carries out the reaction 1,2-dioctanoyl-3-O-[alpha-D-galactosyl-(1-&gt;6)-beta-D-galactosyl]-sn-glycerol + H2O = octanoyl-3-O-[alpha-D-galactosyl-(1-&gt;6)-beta-D-galactosyl]-sn-glycerol + octanoate + H(+). The catalysed reaction is 1,2-didodecanoyl-3-O-[alpha-D-galactosyl-(1-&gt;6)-beta-D-galactosyl]-sn-glycerol + H2O = dodecanoyl-3-O-[alpha-D-galactosyl-(1-&gt;6)-beta-D-galactosyl]-sn-glycerol + dodecanoate + H(+). It catalyses the reaction a 1,2-diacyl-sn-glycero-3-phosphocholine + H2O = a monoacyl-sn-glycero-3-phosphocholine + a fatty acid + H(+). Its pathway is glycerolipid metabolism; triacylglycerol degradation. It functions in the pathway glycolipid metabolism. With respect to regulation, CLPS stimulates triacylglycerol lipase activity. Not inhibited by bile salts. Its function is as follows. Lipase that primarily hydrolyzes triglycerides and galactosylglycerides. In neonates, may play a major role in pancreatic digestion of dietary fats such as milk fat globules enriched in long-chain triglycerides. Hydrolyzes short-, medium- and long-chain fatty acyls in triglycerides without apparent positional specificity. Can completely deacylate triacylglycerols. When the liver matures and bile salt synthesis increases, likely functions mainly as a galactolipase and monoacylglycerol lipase. Hydrolyzes monogalactosyldiglycerols (MGDG) and digalactosyldiacylglycerols (DGDG) present in a plant-based diet, releasing long-chain polyunsaturated fatty acids. Hydrolyzes medium- and long-chain fatty acyls in galactolipids. May act together with LIPF to hydrolyze partially digested triglycerides. Hydrolyzes long-chain monoglycerides with high efficiency. In cytotoxic T cells, contributes to perforin-dependent cell lysis, but is unlikely to mediate direct cytotoxicity. Also has low phospholipase activity. In neurons, required for the localization of the phospholipid 1-oleoyl-2-palmitoyl-PC (OPPC) to neurite tips through acyl chain remodeling of membrane phospholipids. The resulting OPPC-rich lipid membrane domain recruits the t-SNARE protein STX4 by selectively interacting with the STX4 transmembrane domain and this promotes surface expression of the dopamine transporter SLC6A3/DAT at neurite tips by facilitating fusion of SLC6A3-containing transport vesicles with the plasma membrane. The protein is Pancreatic lipase-related protein 2 of Cavia porcellus (Guinea pig).